Reading from the N-terminus, the 65-residue chain is Large ribosomal subunit protein bL35 (65 aa).

Composition is skewed to basic residues over residues 1-16 and 31-45; these read MPKMKTHRASAKRFKK and HRFHGKTKKQRRQLR. Residues 1–47 form a disordered region; that stretch reads MPKMKTHRASAKRFKKTANGGLKSASAYTSHRFHGKTKKQRRQLRGT.

It belongs to the bacterial ribosomal protein bL35 family.

The polypeptide is Large ribosomal subunit protein bL35 (Leuconostoc citreum (strain KM20)).